We begin with the raw amino-acid sequence, 516 residues long: Squalene epoxidase 4 (516 aa).

2 helical membrane-spanning segments follow: residues 2–22 (TYAWLWTLLAFVLTWMVFHLI) and 43–63 (ATDVIIVGAGVAGASLAYALA). FAD contacts are provided by residues 53-54 (VA), 73-74 (ER), R81, R153, V169, D335, and M348. The helical transmembrane segment at 435–455 (ILGGMNPHPLTLVLHLVAITL) threads the bilayer.

Belongs to the squalene monooxygenase family. The cofactor is FAD. Expressed mainly in seedlings and inflorescences.

It is found in the membrane. It carries out the reaction squalene + reduced [NADPH--hemoprotein reductase] + O2 = (S)-2,3-epoxysqualene + oxidized [NADPH--hemoprotein reductase] + H2O + H(+). Its pathway is terpene metabolism; lanosterol biosynthesis; lanosterol from farnesyl diphosphate: step 2/3. In terms of biological role, catalyzes the stereospecific oxidation of squalene to (S)-2,3-epoxysqualene, and is considered to be a rate-limiting enzyme in steroid biosynthesis. The sequence is that of Squalene epoxidase 4 (SQE4) from Arabidopsis thaliana (Mouse-ear cress).